The sequence spans 252 residues: N-acetylglucosaminyl-phosphatidylinositol de-N-acetylase (252 aa).

Residues 2–22 (ELVGFLCVAVAVLTWGFLRVW) form a helical membrane-spanning segment. Over 23 to 252 (NSAERMRSPE…YMRINSLRFL (230 aa)) the chain is Cytoplasmic.

This sequence belongs to the PIGL family.

The protein resides in the endoplasmic reticulum membrane. It catalyses the reaction a 6-(N-acetyl-alpha-D-glucosaminyl)-1-(1,2-diacyl-sn-glycero-3-phospho)-1D-myo-inositol + H2O = a 6-(alpha-D-glucosaminyl)-1-(1,2-diacyl-sn-glycero-3-phospho)-1D-myo-inositol + acetate. Its pathway is glycolipid biosynthesis; glycosylphosphatidylinositol-anchor biosynthesis. Its function is as follows. Catalyzes the second step of glycosylphosphatidylinositol (GPI) biosynthesis, which is the de-N-acetylation of N-acetylglucosaminyl-phosphatidylinositol. This chain is N-acetylglucosaminyl-phosphatidylinositol de-N-acetylase (Pigl), found in Mus musculus (Mouse).